Reading from the N-terminus, the 327-residue chain is Mycothiol acetyltransferase (327 aa).

N-acetyltransferase domains are found at residues 11-159 and 162-327; these read EPHG…VTLP and VQIR…EGTS. Residue Glu42 coordinates 1D-myo-inositol 2-(L-cysteinylamino)-2-deoxy-alpha-D-glucopyranoside. 89–91 is a binding site for acetyl-CoA; the sequence is LVI. 1D-myo-inositol 2-(L-cysteinylamino)-2-deoxy-alpha-D-glucopyranoside-binding residues include Glu189, Lys228, and Glu251. Acetyl-CoA contacts are provided by residues 255-257 and 262-268; these read LGV and QGLGLGR. Tyr289 contacts 1D-myo-inositol 2-(L-cysteinylamino)-2-deoxy-alpha-D-glucopyranoside. 294–299 provides a ligand contact to acetyl-CoA; it reads NAPAIR.

The protein belongs to the acetyltransferase family. MshD subfamily. Monomer.

It carries out the reaction 1D-myo-inositol 2-(L-cysteinylamino)-2-deoxy-alpha-D-glucopyranoside + acetyl-CoA = mycothiol + CoA + H(+). In terms of biological role, catalyzes the transfer of acetyl from acetyl-CoA to desacetylmycothiol (Cys-GlcN-Ins) to form mycothiol. The polypeptide is Mycothiol acetyltransferase (Acidothermus cellulolyticus (strain ATCC 43068 / DSM 8971 / 11B)).